The sequence spans 162 residues: Endoribonuclease YbeY (162 aa).

Zn(2+) is bound by residues His117, His121, and His127.

Belongs to the endoribonuclease YbeY family. The cofactor is Zn(2+).

The protein localises to the cytoplasm. In terms of biological role, single strand-specific metallo-endoribonuclease involved in late-stage 70S ribosome quality control and in maturation of the 3' terminus of the 16S rRNA. This chain is Endoribonuclease YbeY, found in Francisella tularensis subsp. novicida (strain U112).